The sequence spans 267 residues: tRNA pseudouridine synthase A (267 aa).

The active-site Nucleophile is D51. Y109 contributes to the substrate binding site.

It belongs to the tRNA pseudouridine synthase TruA family. In terms of assembly, homodimer.

The catalysed reaction is uridine(38/39/40) in tRNA = pseudouridine(38/39/40) in tRNA. In terms of biological role, formation of pseudouridine at positions 38, 39 and 40 in the anticodon stem and loop of transfer RNAs. The protein is tRNA pseudouridine synthase A of Staphylococcus aureus (strain Mu3 / ATCC 700698).